A 554-amino-acid polypeptide reads, in one-letter code: MSEAEARPTNFIRQIIDEDLASGKHITVHTRFPPEPNGYLHIGHAKSICLNFGIAQDYKGQCNLRFDDTNPVKEDIEYVDSIKNDVEWLGFHWSGNVRYSSDYFDQLHAYAIELINKGLAYVDELTPEQIREYRGTLTQPGKNSPYRDRSVEENLALFEKMRAGGFEEGKACLRAKIDMASPFIVMRDPVLYRIKFAEHHQTGNKWCIYPMYDFTHCISDALEGITHSLCTLEFQDNRRLYDWVLDNITIPVHPRQYEFSRLNLEYTVMSKRKLNLLVTDKHVEGWDDPRMPTISGLRRRGYTAASIREFCKRIGVTKQDNTIEMASLESCIREDLNENAPRAMAVIDPVKLVIENYQGEGEMVTMPNHPNKPEMGSRQVPFSGEIWIDRADFREEANKQYKRLVLGKEVRLRNAYVIKAERVEKDAEGNITTIFCTYDADTLSKDPADGRKVKGVIHWVSAAHALPVEIRLYDRLFSVPNPGAADDFLSVINPESLVIKQGFAEPSLKDAVAGKAFQFEREGYFCLDSRHSTAEKPVFNRTVGLRDTWAKVGE.

Residues 34–44 carry the 'HIGH' region motif; the sequence is PEPNGYLHIGH. Residues 35–37 and 41–47 contribute to the ATP site; these read EPN and HIGHAKS. L-glutamine is bound by residues Asp-67 and Tyr-212. ATP is bound by residues Thr-231, 261-262, and 269-271; these read RL and MSK. Residues 268-272 carry the 'KMSKS' region motif; that stretch reads VMSKR. The interval 317-324 is interaction with tRNA; it reads TKQDNTIE.

This sequence belongs to the class-I aminoacyl-tRNA synthetase family. Monomer.

It is found in the cytoplasm. It carries out the reaction tRNA(Gln) + L-glutamine + ATP = L-glutaminyl-tRNA(Gln) + AMP + diphosphate. The sequence is that of Glutamine--tRNA ligase from Shigella flexneri serotype 5b (strain 8401).